Consider the following 329-residue polypeptide: Phenylalanine--tRNA ligase alpha subunit (329 aa).

Position 254 (glutamate 254) interacts with Mg(2+).

This sequence belongs to the class-II aminoacyl-tRNA synthetase family. Phe-tRNA synthetase alpha subunit type 1 subfamily. As to quaternary structure, tetramer of two alpha and two beta subunits. It depends on Mg(2+) as a cofactor.

It localises to the cytoplasm. It carries out the reaction tRNA(Phe) + L-phenylalanine + ATP = L-phenylalanyl-tRNA(Phe) + AMP + diphosphate + H(+). The chain is Phenylalanine--tRNA ligase alpha subunit from Haemophilus influenzae (strain PittEE).